Reading from the N-terminus, the 392-residue chain is MVVDVESRTASVTGEKMAARGCDACMKRSRASWYCPADDAFLCQSCDASIHSANHLAKRHERVRLQSSSPTETADKTTSVWYEGFRRKARTPRSKSCAFEKLLQIESNDPLVPELGGDEDDGFFSFSSVEETEESLNCCVPVFDPFSDMLIDDINGFCLVPDEVNNTTTNGELGEVEKAIMDDEGFMGFVPLDMDLEDLTMDVESLLEEEQLCLGFKEPNDVGVIKEENKVGFEINCKDLKRVKDEDEEEEEAKCENGGSKDSDREASNDKDRKTSLFLRLDYGAVISAWDNHGSPWKTGIKPECMLGGNTCLPHVVGGYEKLMSSDGSVTRQQGRDGGGSDGEREARVLRYKEKRRTRLFSKKIRYEVRKLNAEQRPRIKGRFVKRTSLLT.

C22, C25, C46, and H51 together coordinate Zn(2+). The segment at 22 to 65 (CDACMKRSRASWYCPADDAFLCQSCDASIHSANHLAKRHERVRL) adopts a B box-type; atypical zinc-finger fold. Positions 226–254 (KEENKVGFEINCKDLKRVKDEDEEEEEAK) form a coiled coil. 2 disordered regions span residues 246–271 (EDEE…SNDK) and 326–346 (SDGS…GERE). The segment covering 259–271 (GSKDSDREASNDK) has biased composition (basic and acidic residues). Residues 345–387 (REARVLRYKEKRRTRLFSKKIRYEVRKLNAEQRPRIKGRFVKR) form the CCT domain.

The protein belongs to the CONSTANS family.

Its subcellular location is the nucleus. The polypeptide is Zinc finger protein CONSTANS-LIKE 7 (COL7) (Arabidopsis thaliana (Mouse-ear cress)).